We begin with the raw amino-acid sequence, 140 residues long: Organic hydroperoxide resistance protein-like 1 (140 aa).

The protein belongs to the OsmC/Ohr family.

This is Organic hydroperoxide resistance protein-like 1 from Staphylococcus epidermidis (strain ATCC 35984 / DSM 28319 / BCRC 17069 / CCUG 31568 / BM 3577 / RP62A).